Reading from the N-terminus, the 636-residue chain is Chaperone protein DnaK (636 aa).

Phosphothreonine; by autocatalysis is present on Thr198. The span at Gln602–Ala613 shows a compositional bias: low complexity. A disordered region spans residues Gln602–Lys636. Residues His614 to Asp625 show a composition bias toward basic and acidic residues. Residues Ala626 to Lys636 show a composition bias toward acidic residues.

It belongs to the heat shock protein 70 family.

Acts as a chaperone. The chain is Chaperone protein DnaK from Geotalea daltonii (strain DSM 22248 / JCM 15807 / FRC-32) (Geobacter daltonii).